We begin with the raw amino-acid sequence, 95 residues long: Co-chaperonin GroES (95 aa).

It belongs to the GroES chaperonin family. In terms of assembly, heptamer of 7 subunits arranged in a ring. Interacts with the chaperonin GroEL.

The protein resides in the cytoplasm. In terms of biological role, together with the chaperonin GroEL, plays an essential role in assisting protein folding. The GroEL-GroES system forms a nano-cage that allows encapsulation of the non-native substrate proteins and provides a physical environment optimized to promote and accelerate protein folding. GroES binds to the apical surface of the GroEL ring, thereby capping the opening of the GroEL channel. The chain is Co-chaperonin GroES from Dichelobacter nodosus (strain VCS1703A).